The primary structure comprises 4118 residues: MNRNFNNINNNNNNNNNYHGYQYHQQQQQQNQQQQQQQYNNNVIKYLWNTYTQTVVYQDSLFNLVEFLQFFTLNYYNDTIGDLLFLSNGTLTDITRHLSKHLIEEIGYSCTLLNQQQQTQQTQTQTQSKQQTIPQLSLNNSIPTSFTTTASSTNTTPNAGLKLAEYEIYQYLIGYSTAGEGPLVLAALDILSRQSPNGIPLSFLNFLITILLRILSLPPELLYNNNNNDNNNNINNFSGNNNNNFNNNNHYFNNNHNNHNHHYQHHQLKEKKKNVNKQHFKPIESFFYLQPLPSSLSDMFRDDDYASLSSSYGGGGNLTPLSLSSNHAFSPPLSSLKNSSSNTFTKPSSSTTTTTTTTTQTPTPNSNTDSKQNKDNNNSKNNNKEVSSVVLLGYQILKIVENLVKDKLFLYELVTSDCFSQLLNIFYKLPILSTTASSLPPNSSFSIIYQQLSQIFAQIMSKSCLSSDTIVLIHNFKLIKNLLNIMDKLKEKDEYNMNLIIELNKIILFSIKSSTSITKLLHDDFTKANGYSILLNSMIFISDYGTLKNKIDYIQTTTNLLFIGHRSSYLDKANTKMFEIYLNVFSISTSEETKTELLKCIKGVFYTSLIEESSSSSSLIISSSDNNNNNNNNSDGVNDDKNNNNNNRDNIIFEDVIDMDGNDSYLIFHQFQPFTILFSQFDTLNINNRRMILDMMDVLLTKNRISLNELKEYCNLFKSELPSTVLLVSQHLTELLTKGKVSCDVLGRDLSLTQKLLEFLVNDPTTLRFSSILLQNETELQLCFSILSTNNNNNNSSSKYYSNNIQQQQQQQQQQQQQQKKRHVSRYLVLYMIVTEILSLLLELLVPPSIQTIFIQECQGLKLLYPMLLDEYLIQPALKVIASIAIGGLQLESRIIPDLIMELQNNGGGATNLDSKVLTMRKNIFSSMCYIFHNNPNSKNSFRNFQGFTWSLSILDGISRYLISIDNNNNNSSNNNSNDNLNDFKESLDHSCNGVLNSNNSSNNSNLNGGIGNEIKKSSFNEIFYFLKVLIDMLSAAMKNNSINQEYFRKEIIIISRSLKQCKYMEGIHAISLCDSLLNMAITGSWPPSCENHSLEEGSLFSLYSPITSFFPINTTLSKNFDISFILKFEKKEQMEQQLKQQILLNSNNNINNGNGGSISPSSIINNMNSPGGGSSSSNDSLKSPTRRSRSYTNDFHLDKSSRIPHPPDFNNNNDTMNYDYNFQDDYIESLNSKSSSSFSLDLASVTGDSEIVYYGGSTTSRMIHSPGLPSSSLQALSSNSTKLPEKSSLQLAQERYICCQSCRDTLTLEMPEIFKLIIELMSSDDDISQTEIKSSCYIIRELIFLTNCSLANQKRLSSLLIDIITHFKPLLLSIILYQKQQQQQQQQQQQSNSNSNSNSTIILKKKINNETSTKLKPLLLDLIQTLAGHNLTLIEFRKYFELLKVKDSNNQFIYPIDLLNLLLKISSNRDNIPLYYAELSKHGLEYIDFPSWGERTWPPTKGFGISFWFRYSLPCLNINKSPIYLLSIEGSIGNSSTKSCECQLILENGKLVYKIYHFSGICETYHFSDHKFEPDQFYHISISHSSLLSTTTTTATTANTTTNSTTASTTTTTTNSTTAVSSTTNSISTTAAVAAITTSDGNSGISRENSLGGRDSIGSNSSSSSSSSNSGVSSGSSTNLNKKSPVKLYVNGCLRGQILANYPKSNSMTLYIRFGGVNAASSVISNNQDVQSFNVNNSWNLGNAYFFEEVPLDKEIFYLYLLGPNHFRGLKVDLSAVDSIQPSLDKVSNLHPFLIDHLLNPTVQPLLSLHEKIMYIFTAKCLYVTTHRITNKTESVTHASALPQLSTILFQQQQLQQQQLQQQITNSTTSILNELNLSNSINLIRRGSENSLITSSSSSSLSLSLSSNTNNNNNNNTRSSLERSISGNFLQSPSSSNNNLRERSINNNNNNNNNSNNNNNNNSISSSTSSLSSSVISLVAGAMAVPSPPSPNKLGSGINGSSILNASLTTLSISTNNNSNNSNNSNSNNNNNNNNTNYNSNSLNNSLNHQALSLLHTGLPIALPRGVISQIGVKDAIMNSGGVSVIIYLIAMAEDKEYQRSGLKLLQSIIHNSQLNLKDMKEISGYQLVSFLIRKKNWVLDDQLLSILFSFVGIQSTRTSIHYVDGVVQDVLALKHFLLERSIWRRASLIDQKKLFESLEKLVNVLHENHEFNIIKFRQAGAYETILKMCREDDLPLELLSTLTKILRSITTNKSNKLKDDLQLILSWLLETMPKQQIFKKYNSFNGLNSTNNSNNNNNNPISLFRKGRKTLLQVQFDNHQLYLQQQQQQNLIPQVNSNNNNEESNNGIEGIIRINILNLLLDILSKTELSVVEDFHSICSLETIFGLLTCESMVSRVMFLKIIDIFLHSQMIFGHFQKMKGFHLLGHQLLPFETSEKIFGVLFCILFGKPSNSDILEGLSMRMYFLSHLSDAEMKYPGAIVTILIILCNSNSTTQHNVIKMIHNIFLQNDQFKQSLLDNELIPRLVDILSSNYQRRGSSSSSTNSTTNNNNNNSSTTTTSNNNNNNNENNNEDDWVAEESILSLLKEIALYGAKSQDGSAALLRDILVVLHLNTRMDYDYICCLQRRVLFDVISFFNDNIHSFSSIDSLVSSFEKLCVLTIHTLSYQEKLLLTNGTGTGGGTGGSGGGLLTKKSFRSNLFSPSRSKEKEKEKEKEKEKEKEKEKERERERETTNVTSDSDNILSANDIFYGDQSNEESSTTDSDSTSDNNNNNNRNSYSGRNIRGNGINNNNNKNKFIPIWIKEGNLLDQEEFIRSLLKVLSKSKIPQSNTTYRNLFSTQYSARSLLCKFIFILLTFDEFKDYYLMVLQELSNMVPSLSNTPISSSPIISPINNNNNYYNTNSNTNSNSSTPSLFSITSNNNNNNNNNNNNNNNNNNNNNTNSTNQTITDTTLSPASSNVSISNQSTPISNNNNNNNSSGGGSGGSNINIPPTINISDSNSNSNEQQGISSVLSEIIMEEDFILVLLHITHKFLQSGNDYEIQRNSFRLWVSIIQHCSQVDYVKKAFDTTTTSLAVLSSSQEIRDLLIRYQQIYVENEFKKWEEKFNQSKKEWKLQYFETQKNKQSMITKNQDITKSTKKLSDSLIQLKSEYEKSNYQYLIENRESKRFFQSQWKLLIKKVTHEKAIWSPNYEISNSSSTNITTTTTTTTTAKKWKLDPTEGLNRMRMRLKVISDNTSNSHIPLIPDLSTPSTPPSPQNTKDQLLFNFNNYNNNNNNNNNNGLNAPPLHGSLDYSSFDNLKLGEKVNEVFKCSCISPFYQRDGELLIGDQNVYFLDELLTSADRKKTTASTVGGSNNNNNNNNNNNNNNNNNNNNSNDTTSSINSTTATNTNTTNTTTTNTTTTTTTTNGLSNIVKPPQRGKHITWSYDDIIEIHKRRHVLKNNAIEIFLGSGVPHKTYLFAFNKPSDRDIVYDLIMSKPLPNRVDYAAEVHGNILKMSITKKWQSGLISNFEYLMHLNTLAGRSFNDLTQYPIFPFILRDYESEVLDLENPNTFRDFTKPMGAQDPKRLEKFIEKYNDLLEMNEKPYHYGSHYSNIGSVLHFLVRLQPFTSYFIDFQGGRFDVPDRAFHSIAQSWNLSSSISNSDVKELIPEFFYLSDFLVNSNKFFMGIKQNGVKVDDVILPPWAHNDPRLFIKKHNEALECKYVSENLHHWIDLLFGYKQQGEAAVKAHNMFFPLTYEGAVDIDSIEDQLNRDAAVAQIHSYGQTPKQIFTKPHPKKNWSKTIRLTQDSIFTKPERLTSYIMFQYRSPIGSITIANDSSPIHLTPQRILFFPDNNKSISWGHWDQNLRVNSIDTGKVLSIIEVLNDDIICGDITKNGRLFVTGGTAGTVKVWKRCNNDGTIMTRKERGDNLSLWSTLYGHTNSILCVTVSQEYSIIVSGSKDSNCIIWDLNRLTYINSLQHDHPVTCVQVSPTFGYIATFETNIYNKQNNNSGGGGSKNDNSINGSGCLRLWSINGTLLAKQNFVNDRVNCMIFTSTIQGVNTNLLITGMESGTIILWNAWNLQKIRTLVSKSTITALAVSKDNTQLISGDINGLIECLSSRSFDGYSSIVLG.

Residues 1–35 are disordered; the sequence is MNRNFNNINNNNNNNNNYHGYQYHQQQQQQNQQQQ. Residues 198–218 traverse the membrane as a helical segment; that stretch reads GIPLSFLNFLITILLRILSLP. The span at 236 to 257 shows a compositional bias: low complexity; that stretch reads NFSGNNNNNFNNNNHYFNNNHN. Disordered stretches follow at residues 236-267, 332-382, and 621-644; these read NFSG…QHHQ, PLSS…SKNN, and ISSS…KNNN. The span at 258–267 shows a compositional bias: basic residues; the sequence is NHNHHYQHHQ. 2 stretches are compositionally biased toward low complexity: residues 332–381 and 621–636; these read PLSS…NSKN and ISSS…NSDG. Residues 827-847 traverse the membrane as a helical segment; the sequence is YLVLYMIVTEILSLLLELLVP. Over residues 1155-1170 the composition is skewed to low complexity; sequence NGGSISPSSIINNMNS. Disordered stretches follow at residues 1155-1213, 1599-1622, 1643-1681, 1928-1968, 2015-2044, 2537-2574, 2702-2741, 2754-2791, 2902-3007, 3245-3265, and 3348-3418; these read NGGS…FNNN, ANTT…TAVS, NSGI…STNL, GNFL…ISSS, STNN…SNSL, RRGS…NNNE, FSPS…TSDS, DQSN…NGIN, NTNS…NSNE, PLIP…TKDQ, and KTTA…NIVK. Composition is skewed to low complexity over residues 1657–1678 and 1935–1968; these read SIGS…SGSS and SSSN…ISSS. The span at 2540–2571 shows a compositional bias: low complexity; sequence SSSSSTNSTTNNNNNNSSTTTTSNNNNNNNEN. Positions 2705–2738 form a coiled coil; sequence SRSKEKEKEKEKEKEKEKEKEKERERERETTNVT. Residues 2706-2734 show a composition bias toward basic and acidic residues; it reads RSKEKEKEKEKEKEKEKEKEKERERERET. Composition is skewed to low complexity over residues 2758–2791 and 2902–2947; these read EESS…NGIN and NTNS…NSTN. Positions 2948–2962 are enriched in polar residues; the sequence is QTITDTTLSPASSNV. 2 stretches are compositionally biased toward low complexity: residues 2963 to 2980 and 2988 to 3006; these read SISN…NNNS and SNIN…SNSN. The region spanning 3303-3479 is the BEACH-type PH domain; it reads KLGEKVNEVF…DRDIVYDLIM (177 aa). The segment covering 3357–3411 has biased composition (low complexity); sequence SNNNNNNNNNNNNNNNNNNNNSNDTTSSINSTTATNTNTTNTTTTNTTTTTTTTN. Residues 3491-3782 form the BEACH domain; it reads AEVHGNILKM…QIFTKPHPKK (292 aa). 5 WD repeats span residues 3868–3907, 3924–3963, 3984–4027, 4029–4073, and 4075–4114; these read VLND…GTIM, GHTN…YINS, TFET…LAKQ, FVND…KIRT, and VSKS…GYSS.

The protein resides in the membrane. The protein localises to the lysosome. Its subcellular location is the endosome. Involved in negative regulation of lysosome biogenesis, by limiting the heterotypic fusion of early endosomes and postlysosomal compartments. This Dictyostelium discoideum (Social amoeba) protein is BEACH domain-containing protein lvsB (lvsB).